We begin with the raw amino-acid sequence, 327 residues long: MKELFKRGGIMLFDKNILQKIDEELKTYVDKDDKLYNASKHLLFAGGKRIRPYLTVVTYMLKKDDIEEVLPAAAAVELIHNYTLIHDDIMDNDDERRGKPTVHVVYGEPMAILAGDLLYAKAFEAVSRIKDNKKAHEVLKILSKACVEVCEGQAMDMEFENYYPTMEEYLDMIRKKTGALLEASVGIGAVMADCNEEEREALKEYAKRIGLTFQIQDDVLDLIGDQKKLGKPVGSDIREGKKTIIVIHALKTLDEDKKKRLLEILGNKNVKDEEIKEAIEILKPSIEYAKELMKQKTEEAKEYLKIFNKDRRKVLEDLADFIMSRIY.

The isopentenyl diphosphate site is built by K48, R51, and H80. Residues D87 and D91 each contribute to the Mg(2+) site. An all-trans-polyprenyl diphosphate is bound at residue R96. R97 contacts isopentenyl diphosphate. Residues K176, T177, Q214, K231, and K241 each contribute to the an all-trans-polyprenyl diphosphate site.

It belongs to the FPP/GGPP synthase family. In terms of assembly, homodimer. Requires Mg(2+) as cofactor.

The protein localises to the cytoplasm. This Methanocaldococcus jannaschii (strain ATCC 43067 / DSM 2661 / JAL-1 / JCM 10045 / NBRC 100440) (Methanococcus jannaschii) protein is Short chain isoprenyl diphosphate synthase (idsA).